The primary structure comprises 301 residues: Probable alpha-L-glutamate ligase (301 aa).

The ATP-grasp domain occupies 104-287 (LQLLSRRGIG…VAGMIIEHLE (184 aa)). ATP is bound by residues Lys-141, 178–179 (EY), Asp-187, and 211–213 (RSN). Positions 248, 260, and 262 each coordinate Mg(2+). Mn(2+) is bound by residues Asp-248, Glu-260, and Asn-262.

It belongs to the RimK family. Mg(2+) is required as a cofactor. The cofactor is Mn(2+).

The sequence is that of Probable alpha-L-glutamate ligase from Pseudomonas putida (strain W619).